Here is a 514-residue protein sequence, read N- to C-terminus: 2,3-bisphosphoglycerate-independent phosphoglycerate mutase (514 aa).

Residues Asp-14 and Ser-64 each contribute to the Mn(2+) site. Catalysis depends on Ser-64, which acts as the Phosphoserine intermediate. Substrate-binding positions include His-125, 155 to 156, Arg-187, Arg-193, 263 to 266, and Lys-336; these read RD and RADR. Residues Asp-403, His-407, Asp-444, His-445, and His-463 each contribute to the Mn(2+) site.

This sequence belongs to the BPG-independent phosphoglycerate mutase family. Monomer. The cofactor is Mn(2+).

It catalyses the reaction (2R)-2-phosphoglycerate = (2R)-3-phosphoglycerate. The protein operates within carbohydrate degradation; glycolysis; pyruvate from D-glyceraldehyde 3-phosphate: step 3/5. Functionally, catalyzes the interconversion of 2-phosphoglycerate and 3-phosphoglycerate. This chain is 2,3-bisphosphoglycerate-independent phosphoglycerate mutase, found in Escherichia coli O1:K1 / APEC.